The following is a 305-amino-acid chain: UDP-3-O-acyl-N-acetylglucosamine deacetylase (305 aa).

The Zn(2+) site is built by histidine 78, histidine 237, and aspartate 241. The Proton donor role is filled by histidine 264.

It belongs to the LpxC family. It depends on Zn(2+) as a cofactor.

It catalyses the reaction a UDP-3-O-[(3R)-3-hydroxyacyl]-N-acetyl-alpha-D-glucosamine + H2O = a UDP-3-O-[(3R)-3-hydroxyacyl]-alpha-D-glucosamine + acetate. The protein operates within glycolipid biosynthesis; lipid IV(A) biosynthesis; lipid IV(A) from (3R)-3-hydroxytetradecanoyl-[acyl-carrier-protein] and UDP-N-acetyl-alpha-D-glucosamine: step 2/6. In terms of biological role, catalyzes the hydrolysis of UDP-3-O-myristoyl-N-acetylglucosamine to form UDP-3-O-myristoylglucosamine and acetate, the committed step in lipid A biosynthesis. This chain is UDP-3-O-acyl-N-acetylglucosamine deacetylase, found in Ralstonia pickettii (strain 12J).